We begin with the raw amino-acid sequence, 154 residues long: Endoribonuclease YbeY (154 aa).

Residues histidine 114, histidine 118, and histidine 124 each contribute to the Zn(2+) site.

Belongs to the endoribonuclease YbeY family. Zn(2+) serves as cofactor.

Its subcellular location is the cytoplasm. Single strand-specific metallo-endoribonuclease involved in late-stage 70S ribosome quality control and in maturation of the 3' terminus of the 16S rRNA. The polypeptide is Endoribonuclease YbeY (Marinomonas sp. (strain MWYL1)).